The primary structure comprises 435 residues: Trigger factor (435 aa).

One can recognise a PPIase FKBP-type domain in the interval 164-249 (GDFAKFDFEG…LHEIQGKKAG (86 aa)).

This sequence belongs to the FKBP-type PPIase family. Tig subfamily.

Its subcellular location is the cytoplasm. It carries out the reaction [protein]-peptidylproline (omega=180) = [protein]-peptidylproline (omega=0). Functionally, involved in protein export. Acts as a chaperone by maintaining the newly synthesized protein in an open conformation. Functions as a peptidyl-prolyl cis-trans isomerase. The polypeptide is Trigger factor (Campylobacter fetus subsp. fetus (strain 82-40)).